Consider the following 172-residue polypeptide: Shikimate kinase (172 aa).

An ATP-binding site is contributed by 14–19 (GAGKST). Ser18 is a Mg(2+) binding site. Residues Asp36, Arg60, and Gly82 each coordinate substrate. Residue Arg120 participates in ATP binding. A substrate-binding site is contributed by Arg140.

The protein belongs to the shikimate kinase family. As to quaternary structure, monomer. Requires Mg(2+) as cofactor.

Its subcellular location is the cytoplasm. The catalysed reaction is shikimate + ATP = 3-phosphoshikimate + ADP + H(+). Its pathway is metabolic intermediate biosynthesis; chorismate biosynthesis; chorismate from D-erythrose 4-phosphate and phosphoenolpyruvate: step 5/7. Functionally, catalyzes the specific phosphorylation of the 3-hydroxyl group of shikimic acid using ATP as a cosubstrate. This is Shikimate kinase from Tolumonas auensis (strain DSM 9187 / NBRC 110442 / TA 4).